The chain runs to 212 residues: MSSLTGKLIVIEGLEGAGKSTAVNLVVELLSQKKISTITTREPGGTRIGEILRSIIKNPEYNNVLDDRSELLLLYAARIQLIEQVIKPALNEGQWVIADRFELSTLAYQGGGRKMDMRVINELSNFCLKGFKPDLTLYLDINPELGMIRAKSRGKFDRIEQESIEFFHRIHDTYHILVKQNPEIMMIDANRPLEDVQSSIQSVIEEFIEHNL.

13–20 contributes to the ATP binding site; sequence GLEGAGKS.

Belongs to the thymidylate kinase family.

It carries out the reaction dTMP + ATP = dTDP + ADP. Functionally, phosphorylation of dTMP to form dTDP in both de novo and salvage pathways of dTTP synthesis. The polypeptide is Thymidylate kinase (Legionella pneumophila (strain Corby)).